The primary structure comprises 326 residues: Protease inhibitor (326 aa).

The first 24 residues, 1–24, serve as a signal peptide directing secretion; the sequence is MKTIRTGMMTLAALAVLGTNVVSA. 2 tandem repeats follow at residues 177-208 and 272-304. The segment at 177-304 is 2 X 32 AA approximate repeats; that stretch reads IILHVDKETK…DLKAEMKVFA (128 aa).

Proteolytically cleaved to yield at least three forms (BBRPI-A, -B, and -C).

It localises to the secreted. Its function is as follows. Shows inhibitory activity towards serine proteases, such as trypsin, chymotrypsin and subtilisin. May form a trypsin-inhibitor complex in a molar ratio of 1:1. The chain is Protease inhibitor from Brevibacillus choshinensis.